A 348-amino-acid polypeptide reads, in one-letter code: Small ribosomal subunit biogenesis GTPase RsgA (348 aa).

A CP-type G domain is found at 72 to 230; it reads RNQLSRPAIA…IADTPGFNQP (159 aa). Residues 121-124 and 172-180 each bind GTP; these read TKAD and GPSGVGKSS. Cysteine 255, cysteine 260, histidine 262, and cysteine 268 together coordinate Zn(2+). The segment covering 305–322 has biased composition (basic and acidic residues); the sequence is AKSDRQGQQRLEPLLDAK. The interval 305–348 is disordered; the sequence is AKSDRQGQQRLEPLLDAKKYRRRSRRQQHQHVNPMAEEVLDSEW. Residues 323 to 333 are compositionally biased toward basic residues; that stretch reads KYRRRSRRQQH.

This sequence belongs to the TRAFAC class YlqF/YawG GTPase family. RsgA subfamily. Monomer. Associates with 30S ribosomal subunit, binds 16S rRNA. Zn(2+) is required as a cofactor.

It localises to the cytoplasm. One of several proteins that assist in the late maturation steps of the functional core of the 30S ribosomal subunit. Helps release RbfA from mature subunits. May play a role in the assembly of ribosomal proteins into the subunit. Circularly permuted GTPase that catalyzes slow GTP hydrolysis, GTPase activity is stimulated by the 30S ribosomal subunit. The sequence is that of Small ribosomal subunit biogenesis GTPase RsgA from Thermosynechococcus vestitus (strain NIES-2133 / IAM M-273 / BP-1).